A 770-amino-acid chain; its full sequence is Metabotropic glutamate receptor-like protein F (770 aa).

A signal peptide spans 1–22 (MKIKNFIYFLIYFIFLFKVING). Over 23 to 370 (QNKTCKISVL…STVDYPESLK (348 aa)) the chain is Extracellular. N-linked (GlcNAc...) asparagine glycosylation is found at N24, N185, N260, N286, N319, and N344. Residues 371–391 (IGVTVVSGFCIFLCLISMIIV) form a helical membrane-spanning segment. Residues 392–405 (IKFKEAKVIKSSSP) are Cytoplasmic-facing. Residues 406-426 (IFCLLILFGCIVIFVGCIMFA) form a helical membrane-spanning segment. At 427–442 (RSPTDGSCRSRVWLLS) the chain is on the extracellular side. A helical membrane pass occupies residues 443–463 (LGYTIFLGNLMVKNWRIWLLF). Over 464–483 (DNPKLKKRAITNWKLYPWVS) the chain is Cytoplasmic. A helical membrane pass occupies residues 484-504 (GIVIIDIVILSIWQALGDIVA). Residues 505–528 (ESRTGIDSLTKYEYRNVCASSDQG) lie on the Extracellular side of the membrane. Residues 529–549 (SIALYLLLVFHGLILLVACFI) form a helical membrane-spanning segment. The Cytoplasmic segment spans residues 550-565 (SFKIKVVDIEEFNESK). Residues 566 to 586 (PITTSVYIITFCLFIVIPIMV) form a helical membrane-spanning segment. The Extracellular portion of the chain corresponds to 587-594 (SSPTVTTQ). The chain crosses the membrane as a helical span at residues 595–615 (TTIICICALITTMLSIILLFG). Residues 616 to 770 (TKFFKMITVG…GQTEIDSNDV (155 aa)) lie on the Cytoplasmic side of the membrane. Residues 639–740 (SSHSQRTKSS…EEKQKDEEEI (102 aa)) are disordered. Basic and acidic residues-rich tracts occupy residues 676 to 693 (SSEK…KDHM) and 730 to 740 (NEEKQKDEEEI). Residues 715–760 (REQINDNIILENNNDNEEKQKDEEEIKEEKLLVSEIQAKRLSLEQN) are a coiled coil.

The protein in the N-terminal section; belongs to the BMP lipoprotein family. This sequence in the C-terminal section; belongs to the G-protein coupled receptor 3 family. GABA-B receptor subfamily.

Its subcellular location is the membrane. The sequence is that of Metabotropic glutamate receptor-like protein F (grlF) from Dictyostelium discoideum (Social amoeba).